Here is a 131-residue protein sequence, read N- to C-terminus: Translation initiation factor 5A (131 aa).

Lys37 carries the post-translational modification Hypusine.

Belongs to the eIF-5A family.

Its subcellular location is the cytoplasm. Its function is as follows. Functions by promoting the formation of the first peptide bond. The polypeptide is Translation initiation factor 5A (eIF5A) (Methanococcus maripaludis (strain C6 / ATCC BAA-1332)).